Here is a 302-residue protein sequence, read N- to C-terminus: 33 kDa chaperonin (302 aa).

Intrachain disulfides connect C234-C236 and C267-C270.

The protein belongs to the HSP33 family. In terms of processing, under oxidizing conditions two disulfide bonds are formed involving the reactive cysteines. Under reducing conditions zinc is bound to the reactive cysteines and the protein is inactive.

It localises to the cytoplasm. Redox regulated molecular chaperone. Protects both thermally unfolding and oxidatively damaged proteins from irreversible aggregation. Plays an important role in the bacterial defense system toward oxidative stress. The protein is 33 kDa chaperonin of Neisseria gonorrhoeae (strain ATCC 700825 / FA 1090).